We begin with the raw amino-acid sequence, 156 residues long: uncharacterized protein (156 aa).

The next 2 helical transmembrane spans lie at 46 to 66 (GLVL…AGVV) and 114 to 134 (IIDI…IVAL).

The protein localises to the cell membrane. This is an uncharacterized protein from Haemophilus influenzae (strain ATCC 51907 / DSM 11121 / KW20 / Rd).